The following is a 254-amino-acid chain: Leucyl/phenylalanyl-tRNA--protein transferase (254 aa).

It belongs to the L/F-transferase family.

It is found in the cytoplasm. The enzyme catalyses N-terminal L-lysyl-[protein] + L-leucyl-tRNA(Leu) = N-terminal L-leucyl-L-lysyl-[protein] + tRNA(Leu) + H(+). It carries out the reaction N-terminal L-arginyl-[protein] + L-leucyl-tRNA(Leu) = N-terminal L-leucyl-L-arginyl-[protein] + tRNA(Leu) + H(+). The catalysed reaction is L-phenylalanyl-tRNA(Phe) + an N-terminal L-alpha-aminoacyl-[protein] = an N-terminal L-phenylalanyl-L-alpha-aminoacyl-[protein] + tRNA(Phe). Its function is as follows. Functions in the N-end rule pathway of protein degradation where it conjugates Leu, Phe and, less efficiently, Met from aminoacyl-tRNAs to the N-termini of proteins containing an N-terminal arginine or lysine. This chain is Leucyl/phenylalanyl-tRNA--protein transferase, found in Burkholderia cenocepacia (strain ATCC BAA-245 / DSM 16553 / LMG 16656 / NCTC 13227 / J2315 / CF5610) (Burkholderia cepacia (strain J2315)).